The primary structure comprises 188 residues: Putative pre-16S rRNA nuclease (188 aa).

A disordered region spans residues Leu-156–Glu-188. The segment covering Ser-166–Glu-188 has biased composition (acidic residues).

The protein belongs to the YqgF nuclease family.

It is found in the cytoplasm. Functionally, could be a nuclease involved in processing of the 5'-end of pre-16S rRNA. In Rhodospirillum centenum (strain ATCC 51521 / SW), this protein is Putative pre-16S rRNA nuclease.